A 341-amino-acid polypeptide reads, in one-letter code: tRNA N6-adenosine threonylcarbamoyltransferase (341 aa).

Residues His111 and His115 each coordinate Fe cation. Residues 134–138 (LVSGG), Asp167, Gly180, and Asn276 contribute to the substrate site. Asp304 contributes to the Fe cation binding site.

This sequence belongs to the KAE1 / TsaD family. Fe(2+) serves as cofactor.

The protein localises to the cytoplasm. It carries out the reaction L-threonylcarbamoyladenylate + adenosine(37) in tRNA = N(6)-L-threonylcarbamoyladenosine(37) in tRNA + AMP + H(+). In terms of biological role, required for the formation of a threonylcarbamoyl group on adenosine at position 37 (t(6)A37) in tRNAs that read codons beginning with adenine. Is involved in the transfer of the threonylcarbamoyl moiety of threonylcarbamoyl-AMP (TC-AMP) to the N6 group of A37, together with TsaE and TsaB. TsaD likely plays a direct catalytic role in this reaction. The polypeptide is tRNA N6-adenosine threonylcarbamoyltransferase (Pseudomonas putida (strain ATCC 700007 / DSM 6899 / JCM 31910 / BCRC 17059 / LMG 24140 / F1)).